The primary structure comprises 277 residues: Ribosomal RNA small subunit methyltransferase I (277 aa).

It belongs to the methyltransferase superfamily. RsmI family.

The protein localises to the cytoplasm. The enzyme catalyses cytidine(1402) in 16S rRNA + S-adenosyl-L-methionine = 2'-O-methylcytidine(1402) in 16S rRNA + S-adenosyl-L-homocysteine + H(+). Its function is as follows. Catalyzes the 2'-O-methylation of the ribose of cytidine 1402 (C1402) in 16S rRNA. This Mycoplasma genitalium (strain ATCC 33530 / DSM 19775 / NCTC 10195 / G37) (Mycoplasmoides genitalium) protein is Ribosomal RNA small subunit methyltransferase I.